The chain runs to 415 residues: UDP-N-acetylmuramoylalanine--D-glutamate ligase (415 aa).

Position 91-97 (91-97 (GTDGKST)) interacts with ATP.

The protein belongs to the MurCDEF family.

The protein localises to the cytoplasm. It carries out the reaction UDP-N-acetyl-alpha-D-muramoyl-L-alanine + D-glutamate + ATP = UDP-N-acetyl-alpha-D-muramoyl-L-alanyl-D-glutamate + ADP + phosphate + H(+). The protein operates within cell wall biogenesis; peptidoglycan biosynthesis. Functionally, cell wall formation. Catalyzes the addition of glutamate to the nucleotide precursor UDP-N-acetylmuramoyl-L-alanine (UMA). The chain is UDP-N-acetylmuramoylalanine--D-glutamate ligase from Aquifex aeolicus (strain VF5).